The following is a 105-amino-acid chain: Small ribosomal subunit protein uS10 (105 aa).

It belongs to the universal ribosomal protein uS10 family. As to quaternary structure, part of the 30S ribosomal subunit.

Its function is as follows. Involved in the binding of tRNA to the ribosomes. The polypeptide is Small ribosomal subunit protein uS10 (Thermus thermophilus (strain ATCC BAA-163 / DSM 7039 / HB27)).